The primary structure comprises 126 residues: uncharacterized protein (126 aa).

The HIT domain occupies 19 to 126 (IFERIIEGAV…LGGGLLGSIA (108 aa)). A Histidine triad motif motif is present at residues 111 to 115 (HLHIH).

This is an uncharacterized protein from Chlamydia muridarum (strain MoPn / Nigg).